Here is a 337-residue protein sequence, read N- to C-terminus: tRNA N6-adenosine threonylcarbamoyltransferase (337 aa).

2 residues coordinate Fe cation: H111 and H115. Substrate-binding positions include 134-138 (LVSGG), D167, G180, and N272. D300 lines the Fe cation pocket.

It belongs to the KAE1 / TsaD family. The cofactor is Fe(2+).

It localises to the cytoplasm. The catalysed reaction is L-threonylcarbamoyladenylate + adenosine(37) in tRNA = N(6)-L-threonylcarbamoyladenosine(37) in tRNA + AMP + H(+). Required for the formation of a threonylcarbamoyl group on adenosine at position 37 (t(6)A37) in tRNAs that read codons beginning with adenine. Is involved in the transfer of the threonylcarbamoyl moiety of threonylcarbamoyl-AMP (TC-AMP) to the N6 group of A37, together with TsaE and TsaB. TsaD likely plays a direct catalytic role in this reaction. In Shewanella loihica (strain ATCC BAA-1088 / PV-4), this protein is tRNA N6-adenosine threonylcarbamoyltransferase.